The chain runs to 357 residues: Queuosine-tRNA galactosyltransferase (357 aa).

The protein belongs to the glycosyltransferase 2 family.

The protein localises to the cytoplasm. The catalysed reaction is queuosine(34) in tRNA(Tyr) + UDP-alpha-D-galactose = O-5''-beta-D-galactosylqueuosine(34) in tRNA(Tyr) + UDP + H(+). Glycosyltransferase that specifically catalyzes galactosylation of cytoplasmic tRNA(Tyr) modified with queuosine at position 34 (queuosine(34)). Galactosylates the cyclopentene hydroxyl group of queuosine(34) in tRNA(Tyr) to form galactosyl-queuosine(34). Mannosylation of queuosine(34) in tRNA(Tyr) is required to slow-down elongation at cognate codons UAC and suppress stop codon readthrough, thereby regulating protein translation. This is Queuosine-tRNA galactosyltransferase from Rattus norvegicus (Rat).